We begin with the raw amino-acid sequence, 453 residues long: Secreted aspartic protease 10 (453 aa).

Positions Met-1–Cys-20 are cleaved as a signal peptide. Residues Tyr-52–Ala-372 enclose the Peptidase A1 domain. Residue Asp-70 is part of the active site. Residue Asp-70 to Gly-72 coordinates pepstatin A. A disulfide bridge connects residues Cys-85 and Cys-112. N-linked (GlcNAc...) asparagine glycans are attached at residues Asn-115 and Asn-128. Position 138 to 139 (Val-138 to Asp-139) interacts with pepstatin A. Residues Asn-168, Asn-208, Asn-211, and Asn-245 are each glycosylated (N-linked (GlcNAc...) asparagine). Asp-266 is an active-site residue. A pepstatin A-binding site is contributed by Asp-266–Thr-270. Residue Asn-287 is glycosylated (N-linked (GlcNAc...) asparagine). An intrachain disulfide couples Cys-301 to Cys-333. The segment at Asn-387–Asn-432 is disordered. Low complexity predominate over residues Thr-397–Ser-417. The span at Lys-423–Asn-432 shows a compositional bias: polar residues. N-linked (GlcNAc...) asparagine glycosylation is present at Asn-424. Ser-429 carries the GPI-anchor amidated serine lipid modification. Residues Ser-430–Ile-453 constitute a propeptide, removed in mature form.

The protein belongs to the peptidase A1 family. Post-translationally, the GPI-anchor is attached to the protein in the endoplasmic reticulum and serves to target the protein to the cell surface. There, the glucosamine-inositol phospholipid moiety is cleaved off and the GPI-modified mannoprotein is covalently attached via its lipidless GPI glycan remnant to the 1,6-beta-glucan of the outer cell wall layer.

It is found in the secreted. Its subcellular location is the cell membrane. It catalyses the reaction Preferential cleavage at the carboxyl of hydrophobic amino acids, but fails to cleave 15-Leu-|-Tyr-16, 16-Tyr-|-Leu-17 and 24-Phe-|-Phe-25 of insulin B chain. Activates trypsinogen, and degrades keratin.. Functionally, secreted aspartic peptidases (SAPs) are a group of ten acidic hydrolases considered as key virulence factors. These enzymes supply the fungus with nutrient amino acids as well as are able to degrade the selected host's proteins involved in the immune defense. Required for cell surface integrity and cell separation during budding. The polypeptide is Secreted aspartic protease 10 (Candida albicans (strain SC5314 / ATCC MYA-2876) (Yeast)).